The primary structure comprises 226 residues: Histone H1.5 (226 aa).

The span at 1–16 (MSETAPAETATPAPVE) shows a compositional bias: low complexity. The segment at 1-44 (MSETAPAETATPAPVEKSPAKKKATKKAAGAGAAKRKATGPPVS) is disordered. S2 is modified (N-acetylserine; partial). S2 carries the phosphoserine modification. Residue T11 is modified to Phosphothreonine; by GSK3. The residue at position 17 (K17) is an N6-acetyllysine. S18 bears the Phosphoserine mark. At K27 the chain carries N6-methyllysine. An N6-(beta-hydroxybutyryl)lysine; alternate modification is found at K37. K37 is modified (N6-succinyllysine; alternate). T39 is subject to Phosphothreonine. The region spanning 39 to 112 (TGPPVSELIT…GASGSFKLNK (74 aa)) is the H15 domain. Residue K49 is modified to N6-acetyllysine. At K55 the chain carries N6-(beta-hydroxybutyryl)lysine. The residue at position 57 (R57) is a Citrulline. The residue at position 67 (K67) is an N6-(beta-hydroxybutyryl)lysine. K78 is modified (N6-acetyllysine). N6-(beta-hydroxybutyryl)lysine occurs at positions 88, 93, and 109. Positions 98–226 (QTKGTGASGS…KAKKAAAKKK (129 aa)) are disordered. Residues 122-133 (KAKKAGAAKAKK) are compositionally biased toward basic residues. T138 and T155 each carry phosphothreonine. Residues 140-161 (KKAKKAAGAKKAVKKTPKKAKK) are compositionally biased toward basic residues. K168 is modified (N6-acetyllysine). Residues 169 to 187 (KVAKSPKKAKAAAKPKKAT) are compositionally biased toward basic residues. Phosphoserine occurs at positions 173 and 189. The span at 194 to 226 (KAVKPKAAKPKAAKPKAAKPKAAKAKKAAAKKK) shows a compositional bias: basic residues.

This sequence belongs to the histone H1/H5 family. As to quaternary structure, interacts with MSX1. Post-translationally, H1 histones are progressively phosphorylated during the cell cycle, becoming maximally phosphorylated during late G2 phase and M phase, and being dephosphorylated sharply thereafter. Phosphorylated at Thr-11 by GSK3B during mitosis in prometaphase and dephosphorylated in telophase. Citrullination at Arg-57 (H1R54ci) by PADI4 takes place within the DNA-binding site of H1 and results in its displacement from chromatin and global chromatin decondensation, thereby promoting pluripotency and stem cell maintenance. Ubiquitous. Expressed in the majority of the cell lines tested and in testis.

It is found in the nucleus. Its subcellular location is the chromosome. In terms of biological role, histone H1 protein binds to linker DNA between nucleosomes forming the macromolecular structure known as the chromatin fiber. Histones H1 are necessary for the condensation of nucleosome chains into higher-order structured fibers. Also acts as a regulator of individual gene transcription through chromatin remodeling, nucleosome spacing and DNA methylation. The protein is Histone H1.5 of Homo sapiens (Human).